We begin with the raw amino-acid sequence, 433 residues long: Chaperone SurA (433 aa).

The N-terminal stretch at 1–20 is a signal peptide; sequence MKNWRTLIFGLMFSVSTAFA. 2 consecutive PpiC domains span residues 171-272 and 282-382; these read DTEL…KVND and VTEV…QLLD.

The protein resides in the periplasm. The catalysed reaction is [protein]-peptidylproline (omega=180) = [protein]-peptidylproline (omega=0). Chaperone involved in the correct folding and assembly of outer membrane proteins. Recognizes specific patterns of aromatic residues and the orientation of their side chains, which are found more frequently in integral outer membrane proteins. May act in both early periplasmic and late outer membrane-associated steps of protein maturation. The protein is Chaperone SurA of Photorhabdus laumondii subsp. laumondii (strain DSM 15139 / CIP 105565 / TT01) (Photorhabdus luminescens subsp. laumondii).